Consider the following 58-residue polypeptide: U-scoloptoxin(14)-Sa1a (58 aa).

The signal sequence occupies residues 1-18; it reads MNRILGMIFLFCLISCYA.

It belongs to the scoloptoxin-14 family. In terms of processing, contains 4 disulfide bonds. Expressed by the venom gland.

It localises to the secreted. The chain is U-scoloptoxin(14)-Sa1a from Scolopendra alternans (Florida Keys giant centipede).